Reading from the N-terminus, the 129-residue chain is Small ribosomal subunit protein uS11 (129 aa).

The protein belongs to the universal ribosomal protein uS11 family. In terms of assembly, part of the 30S ribosomal subunit. Interacts with proteins S7 and S18. Binds to IF-3.

Its function is as follows. Located on the platform of the 30S subunit, it bridges several disparate RNA helices of the 16S rRNA. Forms part of the Shine-Dalgarno cleft in the 70S ribosome. The polypeptide is Small ribosomal subunit protein uS11 (Allorhizobium ampelinum (strain ATCC BAA-846 / DSM 112012 / S4) (Agrobacterium vitis (strain S4))).